Here is an 85-residue protein sequence, read N- to C-terminus: LYR motif-containing protein 5A (85 aa).

It belongs to the complex I LYR family.

The polypeptide is LYR motif-containing protein 5A (lyrm5a) (Danio rerio (Zebrafish)).